A 403-amino-acid chain; its full sequence is Phosphoglycerate kinase (403 aa).

Substrate is bound by residues 21–23, Arg-36, 59–62, Arg-119, and Arg-159; these read DFN and HLGR. Residues Lys-214, Gly-301, Glu-332, and 359–362 contribute to the ATP site; that span reads GGDS.

It belongs to the phosphoglycerate kinase family. Monomer.

It is found in the cytoplasm. It carries out the reaction (2R)-3-phosphoglycerate + ATP = (2R)-3-phospho-glyceroyl phosphate + ADP. Its pathway is carbohydrate degradation; glycolysis; pyruvate from D-glyceraldehyde 3-phosphate: step 2/5. The protein is Phosphoglycerate kinase of Lactobacillus delbrueckii subsp. lactis.